The chain runs to 610 residues: Glutamine--fructose-6-phosphate aminotransferase [isomerizing] (610 aa).

The Nucleophile; for GATase activity role is filled by cysteine 2. A Glutamine amidotransferase type-2 domain is found at 2–218 (CGIVGAVAQR…EGDVAEITRR (217 aa)). SIS domains lie at 286-426 (AADI…EQGR) and 459-600 (LATD…VDQP). The For Fru-6P isomerization activity role is filled by lysine 605.

Homodimer.

The protein resides in the cytoplasm. The catalysed reaction is D-fructose 6-phosphate + L-glutamine = D-glucosamine 6-phosphate + L-glutamate. Catalyzes the first step in hexosamine metabolism, converting fructose-6P into glucosamine-6P using glutamine as a nitrogen source. The sequence is that of Glutamine--fructose-6-phosphate aminotransferase [isomerizing] from Vibrio parahaemolyticus serotype O3:K6 (strain RIMD 2210633).